The primary structure comprises 613 residues: Probable hydrolase clz13 (613 aa).

Residues 1–25 (MCLLSMRFTVAILLVLLSHCGGSHA) form the signal peptide. Asn61, Asn89, Asn286, Asn422, Asn456, Asn477, and Asn581 each carry an N-linked (GlcNAc...) asparagine glycan.

It belongs to the beta-lactamase family.

It participates in secondary metabolite biosynthesis. Functionally, probable hydrolase; part of the gene cluster that mediates the biosynthesis of squalestatin S1 (SQS1, also known as zaragozic acid A), a heavily oxidized fungal polyketide that offers potent cholesterol lowering activity by targeting squalene synthase (SS). SQS1 is composed of a 2,8-dioxobicyclic[3.2.1]octane-3,4,5-tricarboxyclic acid core that is connected to two lipophilic polyketide arms. These initial steps feature the priming of an unusual benzoic acid starter unit onto the highly reducing polyketide synthase clz14, followed by oxaloacetate extension and product release to generate a tricarboxylic acid containing product. The phenylalanine ammonia lyase (PAL) clz10 and the acyl-CoA ligase clz12 are involved in transforming phenylalanine into benzoyl-CoA. The citrate synthase-like protein clz17 is involved in connecting the C-alpha-carbons of the hexaketide chain and oxaloacetate to afford the tricarboxylic acid unit. The potential hydrolytic enzymes, clz11 and clz13, are in close proximity to pks2 and may participate in product release. On the other side, the tetraketide arm is synthesized by a the squalestatin tetraketide synthase clz2 and enzymatically esterified to the core in the last biosynthetic step, by the acetyltransferase clz6. The biosynthesis of the tetraketide must involve 3 rounds of chain extension. After the first and second rounds methyl-transfer occurs, and in all rounds of extension the ketoreductase and dehydratase are active. The enoyl reductase and C-MeT of clz2 are not active in the final round of extension. The acetyltransferase clz6 appears to have a broad substrate selectivity for its acyl CoA substrate, allowing the in vitro synthesis of novel squalestatins. The biosynthesis of SQS1 requires several oxidative steps likely performed by oxidoreductases clz3, clz15 and clz16. Finally, in support of the identification of the cluster as being responsible for SQS1 production, the cluster contains a gene encoding a putative squalene synthase (SS) clz20, suggesting a likely mechanism for self-resistance. In Cochliobolus lunatus (Filamentous fungus), this protein is Probable hydrolase clz13.